Reading from the N-terminus, the 359-residue chain is MKKYLALALIAPLLISCSTTKKGDTYNEAWVKDTNGFDILMGQFAHNIENIWGFKEVVIAGPKDYVKYTDQYQTRSHINFDDGTITIETIAGTEPAAHLRRAIIKTLLMGDDPSSVDLYSDVDDITISKEPFLYGQVVDNTGQPIRWEGRASNFADYLLKNRLKSRSNGLRIIYSVTINMVPNHLDKRAHKYLGMVRQASRKYGVDESLILAIMQTESSFNPYAVSRSDALGLMQVVQHTAGKDVFRSQGKSGTPSRSFLFDPASNIDIGTAYLAMLNNVYLGGIDNPTSRRYAVITAYNGGAGSVLRVFSNDKIQAANIINTMTPGDVYQTLTTRHPSAESRRYLYKVNTAQKSYRRR.

The first 16 residues, 1-16 (MKKYLALALIAPLLIS), serve as a signal peptide directing secretion. C17 carries N-palmitoyl cysteine lipidation. The S-diacylglycerol cysteine moiety is linked to residue C17.

This sequence belongs to the transglycosylase Slt family.

It is found in the cell outer membrane. The catalysed reaction is Exolytic cleavage of the (1-&gt;4)-beta-glycosidic linkage between N-acetylmuramic acid (MurNAc) and N-acetylglucosamine (GlcNAc) residues in peptidoglycan, from either the reducing or the non-reducing ends of the peptidoglycan chains, with concomitant formation of a 1,6-anhydrobond in the MurNAc residue.. Its function is as follows. Murein-degrading enzyme. May play a role in recycling of muropeptides during cell elongation and/or cell division. The protein is Membrane-bound lytic murein transglycosylase C of Escherichia coli (strain SMS-3-5 / SECEC).